A 365-amino-acid polypeptide reads, in one-letter code: MRERKWEHVLACIWEDVESEESPLFDCVKIVHRALPELDFDDVDMEIELFGKRLSFPLIIAGMTGGHPKTGEINRKLARVARELEIGIGVGSQRAGVKDPEVRWTFEVVREEYPDGLVLANIGLPQLRENGPDLALEVVDMVDADALAVHVNVLQEAVQLEGEADAAGFVDVLAEVCETVDVPVVLKETGAGVSAEDAKLVRDIVDGIDVGGAGGTNWAVVEAVRSKAHGEIPLGYAFSDWGVPTAASILEVRSVVGNDLAIIGTGGVRTGMDVAKVLALGADCAGMALPVLRKVLAEGVRGCVRFLKSIAREVKIAMLMAGCSSVEEMSSVPIVVYGKLREWLECRGVPLDLVCTGDRRTGWNR.

A substrate-binding site is contributed by 4-5 (RK). FMN contacts are provided by residues 62–64 (GMT), S92, and N121. Position 92–94 (92–94 (SQR)) interacts with substrate. Substrate is bound at residue Q155. Mg(2+) is bound at residue E156. FMN contacts are provided by residues K187, T216, 267–269 (GVR), and 288–289 (AL).

This sequence belongs to the IPP isomerase type 2 family. In terms of assembly, homooctamer. Dimer of tetramers. FMN serves as cofactor. Requires NADPH as cofactor. It depends on Mg(2+) as a cofactor.

It is found in the cytoplasm. The catalysed reaction is isopentenyl diphosphate = dimethylallyl diphosphate. Its function is as follows. Involved in the biosynthesis of isoprenoids. Catalyzes the 1,3-allylic rearrangement of the homoallylic substrate isopentenyl (IPP) to its allylic isomer, dimethylallyl diphosphate (DMAPP). The protein is Isopentenyl-diphosphate delta-isomerase of Methanopyrus kandleri (strain AV19 / DSM 6324 / JCM 9639 / NBRC 100938).